Consider the following 1039-residue polypeptide: FHIP family protein GG24907 (1039 aa).

Phosphoserine is present on residues Ser498 and Ser805. Disordered stretches follow at residues 831–877 (ATPT…SASS), 904–945 (GISQ…SNSS), and 957–984 (SNTTTHSASTLHGLDGGPSTGGFNSEPA). 2 stretches are compositionally biased toward polar residues: residues 855 to 877 (TSMFSRKSASTSTTPPNGSSASS) and 904 to 924 (GISQAQTSAGTCETSLSTQPQ). Low complexity predominate over residues 925 to 945 (AGASRTGATATSAAASGSNSS). A compositionally biased stretch (polar residues) spans 957–966 (SNTTTHSAST).

The protein belongs to the FHIP family.

The polypeptide is FHIP family protein GG24907 (Drosophila erecta (Fruit fly)).